The primary structure comprises 235 residues: Large ribosomal subunit protein uL4 (235 aa).

The tract at residues 45 to 75 (RAGTASTKTRGEVSGGGRKPWPQKHTGRARH) is disordered. Residues 65-75 (WPQKHTGRARH) show a composition bias toward basic residues.

The protein belongs to the universal ribosomal protein uL4 family. As to quaternary structure, part of the 50S ribosomal subunit.

Functionally, one of the primary rRNA binding proteins, this protein initially binds near the 5'-end of the 23S rRNA. It is important during the early stages of 50S assembly. It makes multiple contacts with different domains of the 23S rRNA in the assembled 50S subunit and ribosome. In terms of biological role, this protein only weakly controls expression of the E.coli S10 operon. It is incorporated into E.coli ribosomes, however it is not as firmly associated as the endogenous protein. Its function is as follows. Forms part of the polypeptide exit tunnel. This chain is Large ribosomal subunit protein uL4 (rplD), found in Thermotoga maritima (strain ATCC 43589 / DSM 3109 / JCM 10099 / NBRC 100826 / MSB8).